A 356-amino-acid polypeptide reads, in one-letter code: A-type ATP synthase subunit C (356 aa).

This sequence belongs to the V-ATPase V0D/AC39 subunit family. In terms of assembly, has multiple subunits with at least A(3), B(3), C, D, E, F, H, I and proteolipid K(x).

Its subcellular location is the cell membrane. In terms of biological role, component of the A-type ATP synthase that produces ATP from ADP in the presence of a proton gradient across the membrane. This chain is A-type ATP synthase subunit C, found in Thermoplasma acidophilum (strain ATCC 25905 / DSM 1728 / JCM 9062 / NBRC 15155 / AMRC-C165).